Here is a 474-residue protein sequence, read N- to C-terminus: Probable cytosol aminopeptidase (474 aa).

Residues K237 and D242 each contribute to the Mn(2+) site. The active site involves K249. 3 residues coordinate Mn(2+): D260, D319, and E321. Residue R323 is part of the active site.

This sequence belongs to the peptidase M17 family. The cofactor is Mn(2+).

It localises to the cytoplasm. The catalysed reaction is Release of an N-terminal amino acid, Xaa-|-Yaa-, in which Xaa is preferably Leu, but may be other amino acids including Pro although not Arg or Lys, and Yaa may be Pro. Amino acid amides and methyl esters are also readily hydrolyzed, but rates on arylamides are exceedingly low.. It carries out the reaction Release of an N-terminal amino acid, preferentially leucine, but not glutamic or aspartic acids.. Presumably involved in the processing and regular turnover of intracellular proteins. Catalyzes the removal of unsubstituted N-terminal amino acids from various peptides. The protein is Probable cytosol aminopeptidase of Helicobacter hepaticus (strain ATCC 51449 / 3B1).